A 391-amino-acid chain; its full sequence is Elongation factor Tu (391 aa).

Residues 10 to 201 (KPHVNIGTIG…AVDAYIPTPE (192 aa)) form the tr-type G domain. The interval 19-26 (GHVDHGKT) is G1. GTP is bound at residue 19 to 26 (GHVDHGKT). Position 26 (Thr26) interacts with Mg(2+). Positions 55–59 (GITIS) are G2. Positions 76–79 (DCPG) are G3. Residues 76-80 (DCPGH) and 131-134 (NKVD) contribute to the GTP site. Residues 131–134 (NKVD) are G4. The interval 169–171 (SAL) is G5.

It belongs to the TRAFAC class translation factor GTPase superfamily. Classic translation factor GTPase family. EF-Tu/EF-1A subfamily. As to quaternary structure, monomer.

The protein resides in the cytoplasm. The enzyme catalyses GTP + H2O = GDP + phosphate + H(+). Functionally, GTP hydrolase that promotes the GTP-dependent binding of aminoacyl-tRNA to the A-site of ribosomes during protein biosynthesis. In Rhizobium meliloti (strain 1021) (Ensifer meliloti), this protein is Elongation factor Tu.